Here is a 209-residue protein sequence, read N- to C-terminus: E3 ubiquitin-protein ligase RNF138 (209 aa).

The segment at 18–58 (CPVCQEVLKTPVRTAACQHVFCRKCFLTAMRESGIHCPLCR) adopts an RING-type zinc-finger fold. Cys-86, Cys-89, His-101, and Cys-105 together coordinate Zn(2+). The segment at 86-105 (CRCCSKKIKFYRMRHHYKSC) adopts a C2HC RNF-type zinc-finger fold. The segment at 125 to 154 (QDSVRSSNRSETSASDNTETYQEDTSSSGH) is disordered. The residue at position 142 (Thr-142) is a Phosphothreonine. Residues 157–180 (FKCPLCQESNFTRQRLLDHCNSNH) form a C2H2-type zinc finger. Positions 189-207 (LQLDEETQYQTAVEESFQV) constitute a UIM domain.

Interacts with NLK. Interacts with XRCC5/Ku80. Interacts with RBBP8/CtIP. Post-translationally, auto-ubiquitinated.

The protein resides in the chromosome. It catalyses the reaction S-ubiquitinyl-[E2 ubiquitin-conjugating enzyme]-L-cysteine + [acceptor protein]-L-lysine = [E2 ubiquitin-conjugating enzyme]-L-cysteine + N(6)-ubiquitinyl-[acceptor protein]-L-lysine.. The protein operates within protein modification; protein ubiquitination. E3 ubiquitin-protein ligase involved in DNA damage response by promoting DNA resection and homologous recombination. Recruited to sites of double-strand breaks following DNA damage and specifically promotes double-strand break repair via homologous recombination. Two different, non-exclusive, mechanisms have been proposed. According to a report, regulates the choice of double-strand break repair by favoring homologous recombination over non-homologous end joining (NHEJ): acts by mediating ubiquitination of XRCC5/Ku80, leading to remove the Ku complex from DNA breaks, thereby promoting homologous recombination. According to another report, cooperates with UBE2Ds E2 ubiquitin ligases (UBE2D1, UBE2D2, UBE2D3 or UBE2D4) to promote homologous recombination by mediating ubiquitination of RBBP8/CtIP. Together with NLK, involved in the ubiquitination and degradation of TCF/LEF. Also exhibits auto-ubiquitination activity in combination with UBE2K. May act as a negative regulator in the Wnt/beta-catenin-mediated signaling pathway. This chain is E3 ubiquitin-protein ligase RNF138, found in Rattus norvegicus (Rat).